Here is a 300-residue protein sequence, read N- to C-terminus: Ribosomal protein L11 methyltransferase (300 aa).

T152, G173, D195, and N234 together coordinate S-adenosyl-L-methionine.

The protein belongs to the methyltransferase superfamily. PrmA family.

It is found in the cytoplasm. The enzyme catalyses L-lysyl-[protein] + 3 S-adenosyl-L-methionine = N(6),N(6),N(6)-trimethyl-L-lysyl-[protein] + 3 S-adenosyl-L-homocysteine + 3 H(+). Methylates ribosomal protein L11. This is Ribosomal protein L11 methyltransferase from Burkholderia pseudomallei (strain 1710b).